A 350-amino-acid polypeptide reads, in one-letter code: Mitochondrial glycine transporter (350 aa).

3 Solcar repeats span residues Ser-23–Cys-107, Leu-134–Asn-218, and Ser-250–Lys-334. Transmembrane regions (helical) follow at residues Phe-29 to Gln-54, Gly-82 to Ile-108, Leu-140 to Glu-165, Gly-193 to Lys-216, Val-254 to Leu-280, and Gly-309 to Val-327.

This sequence belongs to the mitochondrial carrier (TC 2.A.29) family. SLC25A38 subfamily.

It is found in the mitochondrion inner membrane. The catalysed reaction is glycine(in) = glycine(out). Mitochondrial glycine transporter that imports glycine into the mitochondrial matrix. Plays an important role in providing glycine for the first enzymatic step in heme biosynthesis, the condensation of glycine with succinyl-CoA to produce 5-aminolevulinate (ALA) in the mitochondrial matrix. The polypeptide is Mitochondrial glycine transporter (Ajellomyces capsulatus (strain NAm1 / WU24) (Darling's disease fungus)).